Here is a 198-residue protein sequence, read N- to C-terminus: Glycerol-3-phosphate acyltransferase (198 aa).

5 helical membrane-spanning segments follow: residues 4 to 24, 53 to 75, 80 to 102, 112 to 132, and 134 to 154; these read LALIMIIIAYLLGSISSAVLI, SAAGLVLLCDILKGMLPVWGGYF, PFMLGIIAISACLGHMYPLFFHF, LGALAPIGLDLTGMLFGCWVV, and VLVTGYSSLASMITALLAPLF.

The protein belongs to the PlsY family. As to quaternary structure, probably interacts with PlsX.

It is found in the cell inner membrane. The catalysed reaction is an acyl phosphate + sn-glycerol 3-phosphate = a 1-acyl-sn-glycero-3-phosphate + phosphate. It participates in lipid metabolism; phospholipid metabolism. Functionally, catalyzes the transfer of an acyl group from acyl-phosphate (acyl-PO(4)) to glycerol-3-phosphate (G3P) to form lysophosphatidic acid (LPA). This enzyme utilizes acyl-phosphate as fatty acyl donor, but not acyl-CoA or acyl-ACP. This Aliivibrio fischeri (strain ATCC 700601 / ES114) (Vibrio fischeri) protein is Glycerol-3-phosphate acyltransferase.